Consider the following 463-residue polypeptide: 3-phosphoshikimate 1-carboxyvinyltransferase (463 aa).

3 residues coordinate 3-phosphoshikimate: Lys-26, Ser-27, and Arg-31. Lys-26 lines the phosphoenolpyruvate pocket. Phosphoenolpyruvate is bound by residues Gly-99 and Arg-127. 6 residues coordinate 3-phosphoshikimate: Ser-163, Ser-164, Gln-165, Ser-188, Asp-300, and Lys-327. Residue Gln-165 coordinates phosphoenolpyruvate. Catalysis depends on Asp-300, which acts as the Proton acceptor. Arg-331 and Arg-372 together coordinate phosphoenolpyruvate.

Belongs to the EPSP synthase family. As to quaternary structure, monomer.

It is found in the cytoplasm. It catalyses the reaction 3-phosphoshikimate + phosphoenolpyruvate = 5-O-(1-carboxyvinyl)-3-phosphoshikimate + phosphate. Its pathway is metabolic intermediate biosynthesis; chorismate biosynthesis; chorismate from D-erythrose 4-phosphate and phosphoenolpyruvate: step 6/7. Catalyzes the transfer of the enolpyruvyl moiety of phosphoenolpyruvate (PEP) to the 5-hydroxyl of shikimate-3-phosphate (S3P) to produce enolpyruvyl shikimate-3-phosphate and inorganic phosphate. This is 3-phosphoshikimate 1-carboxyvinyltransferase from Burkholderia pseudomallei (Pseudomonas pseudomallei).